The chain runs to 330 residues: Dimethyladenosine transferase 1, mitochondrial (330 aa).

A mitochondrion-targeting transit peptide spans 1-84 (MAQPSARVLQ…RSILRRHPQR (84 aa)). S-adenosyl-L-methionine-binding positions include 38–41 (QNFL), N39, L41, G67, E89, D118, and N140.

It belongs to the class I-like SAM-binding methyltransferase superfamily. rRNA adenine N(6)-methyltransferase family. KsgA subfamily.

It is found in the mitochondrion. Probable S-adenosyl-L-methionine-dependent methyltransferase which specifically dimethylates mitochondrial 12S rRNA at the conserved stem loop. In contrast to mtTFB2, it does not have a critical role in either transcription or regulation of the copy number of mitochondrial DNA. The sequence is that of Dimethyladenosine transferase 1, mitochondrial (mtTFB1) from Drosophila melanogaster (Fruit fly).